Consider the following 1477-residue polypeptide: Putative insulin-like peptide receptor (1477 aa).

The signal sequence occupies residues 1-24 (MMRNVQSFYFLFLLIVLNFHVVLS). At 25-980 (AVCIGQRATT…LSVTKNNNQL (956 aa)) the chain is on the extracellular side. 13 N-linked (GlcNAc...) asparagine glycosylation sites follow: N55, N255, N300, N325, N457, N491, N549, N644, N732, N791, N874, N895, and N957. Fibronectin type-III domains lie at 652 to 750 (EPLG…IKAD) and 780 to 869 (NKSP…IVQA). Residues 880–971 (LDSKMVRVQV…EEIHFKVAEL (92 aa)) form the Fibronectin type-III 3 domain. The chain crosses the membrane as a helical span at residues 981-1001 (IIGIISAVSAVIVALLVFILL). The Cytoplasmic portion of the chain corresponds to 1002-1477 (YMFLHRKLEK…EIFYGKPIPV (476 aa)). One can recognise a Protein kinase domain in the interval 1044–1315 (IELIRELGQG…LENEVDDDFV (272 aa)). Residues 1050 to 1058 (LGQGSFGMV) and K1077 contribute to the ATP site. The Proton acceptor role is filled by D1175. Position 1201 is a phosphotyrosine; by autocatalysis (Y1201). 2 disordered regions span residues 1350-1376 (YTKG…KSKE) and 1391-1421 (KYDA…SNAC). Over residues 1356–1368 (NMQNMLSRSQNRK) the composition is skewed to polar residues. Positions 1403–1412 (KKKKRPRSKR) are enriched in basic residues.

This sequence belongs to the protein kinase superfamily. Tyr protein kinase family. Insulin receptor subfamily. Requires Mn(2+) as cofactor. Expressed in dividing epithelial cells.

It is found in the membrane. It catalyses the reaction L-tyrosyl-[protein] + ATP = O-phospho-L-tyrosyl-[protein] + ADP + H(+). This receptor probably binds an insulin related protein and has a tyrosine-protein kinase activity. This chain is Putative insulin-like peptide receptor (HTK7), found in Hydra vulgaris (Hydra).